Consider the following 757-residue polypeptide: Cap-specific mRNA (nucleoside-2'-O-)-methyltransferase 1 (757 aa).

Residues 1-61 (MFQSNQYDEY…EDDEEEEDTP (61 aa)) are disordered. Acidic residues-rich tracts occupy residues 18–32 (EENE…NENE) and 40–59 (GDQD…EEED). The G-patch domain occupies 62–108 (KLSFGAKFLAKHGHIEGQGLGKEKDGRIDLIEVDRFQSTKGLGFAEN). The RrmJ-type SAM-dependent 2'-O-MTase domain maps to 214-438 (IFINRAAVKM…ERYIICKNFL (225 aa)). S-adenosyl-L-methionine is bound by residues glycine 257, glutamate 301, and aspartate 352. Lysine 392 functions as the Proton acceptor in the catalytic mechanism. The segment covering 538-548 (HKNRQKHHHNN) has biased composition (basic residues). Residues 538–670 (HKNRQKHHHN…NNNNNNNNKN (133 aa)) form a disordered region. Residues 549–569 (HSNNNNNNNNSNNNNNNNNQH) are compositionally biased toward low complexity. Over residues 570–581 (QHQHHQHQHHQN) the composition is skewed to basic residues. Over residues 597-668 (NNNINNNSNN…NNNNNNNNNN (72 aa)) the composition is skewed to low complexity.

The enzyme catalyses a 5'-end (N(7)-methyl 5'-triphosphoguanosine)-ribonucleoside in mRNA + S-adenosyl-L-methionine = a 5'-end (N(7)-methyl 5'-triphosphoguanosine)-(2'-O-methyl-ribonucleoside) in mRNA + S-adenosyl-L-homocysteine + H(+). In terms of biological role, S-adenosyl-L-methionine-dependent methyltransferase that mediates mRNA cap1 2'-O-ribose methylation to the 5'-cap structure of mRNAs. Methylates the ribose of the first nucleotide of a m(7)GpppG-capped mRNA to produce m(7)GpppNmp (cap1). Cap1 modification is linked to higher levels of translation. In Dictyostelium discoideum (Social amoeba), this protein is Cap-specific mRNA (nucleoside-2'-O-)-methyltransferase 1.